Here is a 1118-residue protein sequence, read N- to C-terminus: DNA mismatch repair protein MSH1, mitochondrial (1118 aa).

768–775 (GPNGGGKS) lines the ATP pocket.

This sequence belongs to the DNA mismatch repair MutS family.

The protein localises to the mitochondrion. It localises to the plastid. It is found in the chloroplast. Functionally, DNA mismatch repair protein specifically involved in maintenance of mitochondrial genome configuration by controlling specific rearranged portion. Functions by suppressing asymmetric recombination at some repeat pairs. This Arabidopsis thaliana (Mouse-ear cress) protein is DNA mismatch repair protein MSH1, mitochondrial (MSH1).